Consider the following 162-residue polypeptide: D-aminoacyl-tRNA deacylase (162 aa).

A Gly-cisPro motif, important for rejection of L-amino acids motif is present at residues 145-146 (GP).

Belongs to the DTD family. As to quaternary structure, homodimer.

It localises to the cytoplasm. It catalyses the reaction glycyl-tRNA(Ala) + H2O = tRNA(Ala) + glycine + H(+). The enzyme catalyses a D-aminoacyl-tRNA + H2O = a tRNA + a D-alpha-amino acid + H(+). An aminoacyl-tRNA editing enzyme that deacylates mischarged D-aminoacyl-tRNAs. Also deacylates mischarged glycyl-tRNA(Ala), protecting cells against glycine mischarging by AlaRS. Acts via tRNA-based rather than protein-based catalysis; rejects L-amino acids rather than detecting D-amino acids in the active site. By recycling D-aminoacyl-tRNA to D-amino acids and free tRNA molecules, this enzyme counteracts the toxicity associated with the formation of D-aminoacyl-tRNA entities in vivo and helps enforce protein L-homochirality. This is D-aminoacyl-tRNA deacylase from Bifidobacterium longum subsp. infantis (strain ATCC 15697 / DSM 20088 / JCM 1222 / NCTC 11817 / S12).